A 454-amino-acid chain; its full sequence is uncharacterized protein (454 aa).

A signal peptide spans 1–21 (MKYKTVKSIPLFLLGSIVFTA). Residue Cys22 is the site of N-palmitoyl cysteine attachment. Cys22 is lipidated: S-diacylglycerol cysteine. Over residues 55–64 (ASSSSSTTTS) the composition is skewed to low complexity. A disordered region spans residues 55–87 (ASSSSSTTTSNDDNNQKGYFLETNRSTGTYDPN). A compositionally biased stretch (polar residues) spans 65–87 (NDDNNQKGYFLETNRSTGTYDPN).

It localises to the cell membrane. This is an uncharacterized protein from Mycoplasma pneumoniae (strain ATCC 29342 / M129 / Subtype 1) (Mycoplasmoides pneumoniae).